A 171-amino-acid polypeptide reads, in one-letter code: Co-chaperone protein HscB homolog (171 aa).

Residues 2-74 (NHFELFGLPP…ISRAEYLLSQ (73 aa)) enclose the J domain.

The protein belongs to the HscB family. As to quaternary structure, interacts with HscA and stimulates its ATPase activity.

In terms of biological role, co-chaperone involved in the maturation of iron-sulfur cluster-containing proteins. Seems to help targeting proteins to be folded toward HscA. This chain is Co-chaperone protein HscB homolog, found in Vibrio vulnificus (strain CMCP6).